A 393-amino-acid chain; its full sequence is Stearoyl-[acyl-carrier-protein] 9-desaturase, chloroplastic (393 aa).

The N-terminal 31 residues, 1–31, are a transit peptide targeting the chloroplast; that stretch reads MASMVAFRPEAFLCFSPPKTTRSTRSPRISM. The Fe cation site is built by Glu-135, Glu-173, His-176, Glu-226, Glu-259, and His-262.

The protein belongs to the fatty acid desaturase type 2 family. Homodimer. Fe(2+) is required as a cofactor.

The protein localises to the plastid. The protein resides in the chloroplast. It carries out the reaction octadecanoyl-[ACP] + 2 reduced [2Fe-2S]-[ferredoxin] + O2 + 2 H(+) = (9Z)-octadecenoyl-[ACP] + 2 oxidized [2Fe-2S]-[ferredoxin] + 2 H2O. It participates in lipid metabolism; fatty acid metabolism. Functionally, converts stearoyl-ACP to oleoyl-ACP by introduction of a cis double bond between carbons 9 and 10 of the acyl chain. This is Stearoyl-[acyl-carrier-protein] 9-desaturase, chloroplastic from Elaeis guineensis var. tenera (Oil palm).